A 604-amino-acid polypeptide reads, in one-letter code: Replication protein E1 (604 aa).

Residues 76-78 (KRK) carry the Nuclear localization signal motif. Phosphoserine; by host is present on residues S81 and S89. A Nuclear export signal motif is present at residues 88 to 97 (LSPRLQSISL). The interval 144–307 (GSGDVDIHYL…TILGHNNAEA (164 aa)) is DNA-binding region. In terms of domain architecture, SF3 helicase spans 406-556 (VNFIMFLAAF…FPMKSDDTPQ (151 aa)). 432–439 (GPPNSGKS) is an ATP binding site. K513 participates in a covalent cross-link: Glycyl lysine isopeptide (Lys-Gly) (interchain with G-Cter in SUMO). Residues 578–604 (SDQEDEGENGESQRAFQCSAGSANEHL) are disordered. Residues 587–604 (GESQRAFQCSAGSANEHL) show a composition bias toward polar residues.

This sequence belongs to the papillomaviridae E1 protein family. As to quaternary structure, can form hexamers. Interacts with E2 protein; this interaction increases E1 DNA binding specificity. Interacts with host DNA polymerase subunit POLA2. Interacts with host single stranded DNA-binding protein RPA1. Interacts with host TOP1; this interaction stimulates the enzymatic activity of TOP1. Phosphorylated. In terms of processing, sumoylated.

Its subcellular location is the host nucleus. The enzyme catalyses Couples ATP hydrolysis with the unwinding of duplex DNA by translocating in the 3'-5' direction.. The catalysed reaction is ATP + H2O = ADP + phosphate + H(+). Functionally, ATP-dependent DNA 3'-5' helicase required for initiation of viral DNA replication. It forms a complex with the viral E2 protein. The E1-E2 complex binds to the replication origin which contains binding sites for both proteins. During the initial step, a dimer of E1 interacts with a dimer of protein E2 leading to a complex that binds the viral origin of replication with high specificity. Then, a second dimer of E1 displaces the E2 dimer in an ATP-dependent manner to form the E1 tetramer. Following this, two E1 monomers are added to each half of the site, which results in the formation of two E1 trimers on the viral ori. Subsequently, two hexamers will be created. The double hexamer acts as a bi-directional helicase machinery and unwinds the viral DNA and then recruits the host DNA polymerase to start replication. This chain is Replication protein E1, found in Homo sapiens (Human).